A 348-amino-acid polypeptide reads, in one-letter code: Uroporphyrinogen decarboxylase (348 aa).

Substrate contacts are provided by residues 27–31 (RQAGR), F46, D76, Y152, S207, and H320.

It belongs to the uroporphyrinogen decarboxylase family. As to quaternary structure, homodimer.

Its subcellular location is the cytoplasm. It catalyses the reaction uroporphyrinogen III + 4 H(+) = coproporphyrinogen III + 4 CO2. It participates in porphyrin-containing compound metabolism; protoporphyrin-IX biosynthesis; coproporphyrinogen-III from 5-aminolevulinate: step 4/4. Catalyzes the decarboxylation of four acetate groups of uroporphyrinogen-III to yield coproporphyrinogen-III. This is Uroporphyrinogen decarboxylase from Bacillus anthracis.